A 255-amino-acid polypeptide reads, in one-letter code: F-box/SPRY domain-containing protein 1 (255 aa).

One can recognise an F-box domain in the interval 3–51; the sequence is DRVAALCNYNVLEVVFSYLDLNDLGRCSQVCKSWFHFLNDENSDVWRFH. The B30.2/SPRY domain maps to 61–253; the sequence is TKSELLSPVP…VSMVYCGTPL (193 aa).

It belongs to the FBXO45/Fsn family. In terms of assembly, component of an E3 ubiquitin ligase complex composed of hiw and Fsn.

The protein resides in the synapse. Its pathway is protein modification; protein ubiquitination. Its function is as follows. Required in the presynaptic motoneuron to down-regulate the levels of wnd and restrain synaptic terminal growth at the neuromuscular junction (NMJ). The chain is F-box/SPRY domain-containing protein 1 from Drosophila persimilis (Fruit fly).